A 115-amino-acid chain; its full sequence is MTRVKRGNVARKRRKKILKITKGFRGSSSTLFRTANQQQMKALRYSYRDRLTRKRNFRALWIVRINAMARHLGLNYNQFINNITKAQIIINRKTLSQLAIYDSTIFSSLISIKNN.

It belongs to the bacterial ribosomal protein bL20 family.

It localises to the plastid. The protein resides in the chloroplast. In terms of biological role, binds directly to 23S ribosomal RNA and is necessary for the in vitro assembly process of the 50S ribosomal subunit. It is not involved in the protein synthesizing functions of that subunit. This chain is Large ribosomal subunit protein bL20c, found in Pleurastrum terricola (Filamentous green alga).